The following is a 221-amino-acid chain: Ependymin-2 (221 aa).

A signal peptide spans 1–21 (MQDFAFAALSIWLCLGATALA). N-linked (GlcNAc...) asparagine glycosylation is found at asparagine 33, asparagine 73, and asparagine 97.

The protein belongs to the ependymin family. In terms of processing, binds calcium through the terminal sialic acids. As to expression, EPDs are synthesized in the meninx and secreted in the cerebrospinal fluid.

The protein resides in the secreted. Functionally, may play a role in neural plasticity. May be involved during axon regeneration. This Oncorhynchus mykiss (Rainbow trout) protein is Ependymin-2 (epd2).